We begin with the raw amino-acid sequence, 482 residues long: MSDTKRDPADLLASLKIDNEKEDTSEVSTKETVKSQPEKTADSIKPAEKLVPKVEEKKTKQEDSNLISSEYEVKVKLADIQADPNSPLYSAKSFDELGLAPELLKGIYAMKFQKPSKIQERALPLLLHNPPRNMIAQSQSGTGKTAAFSLTMLTRVNPEDASPQAICLAPSRELARQTLEVVQEMGKFTKITSQLIVPDSFEKNKQINAQVIVGTPGTVLDLMRRKLMQLQKIKIFVLDEADNMLDQQGLGDQCIRVKRFLPKDTQLVLFSATFADAVRQYAKKIVPNANTLELQTNEVNVDAIKQLYMDCKNEADKFDVLTELYGLMTIGSSIIFVATKKTANVLYGKLKSEGHEVSILHGDLQTQERDRLIDDFREGRSKVLITTNVLARGIDIPTVSMVVNYDLPTLANGQADPATYIHRIGRTGRFGRKGVAISFVHDKNSFNILSAIQKYFGDIEMTRVPTDDWDEVEKIVKKVLKD.

The interval 1 to 62 (MSDTKRDPAD…KVEEKKTKQE (62 aa)) is disordered. The span at 17–62 (IDNEKEDTSEVSTKETVKSQPEKTADSIKPAEKLVPKVEEKKTKQE) shows a compositional bias: basic and acidic residues. Residues Ser86 and Ser93 each carry the phosphoserine modification. A Q motif motif is present at residues 92–120 (KSFDELGLAPELLKGIYAMKFQKPSKIQE). The Helicase ATP-binding domain occupies 125 to 292 (LLLHNPPRNM…KKIVPNANTL (168 aa)). Residue 138 to 145 (SQSGTGKT) participates in ATP binding. A Phosphoserine modification is found at Ser162. Positions 239–242 (DEAD) match the DEAD box motif. The Helicase C-terminal domain occupies 303 to 480 (AIKQLYMDCK…EVEKIVKKVL (178 aa)).

This sequence belongs to the DEAD box helicase family. DDX19/DBP5 subfamily. Associates with the nuclear pore complex. Interacts with NUP159, GLE1, GFD1 and ZDS1. The interaction with NUP159 is necessary for the association to the nuclear pore complex. Also interacts with the TFIIH complex subunits TFB1, TFB2 and RAD3.

The protein resides in the cytoplasm. Its subcellular location is the nucleus. It localises to the nuclear pore complex. It is found in the nucleus membrane. It catalyses the reaction ATP + H2O = ADP + phosphate + H(+). ATP-dependent RNA helicase associated with the nuclear pore complex and essential for mRNA export from the nucleus. May participate in a terminal step of mRNA export through the removal of proteins that accompany mRNA through the nucleopore complex. May also be involved in early transcription. This Saccharomyces cerevisiae (strain YJM789) (Baker's yeast) protein is ATP-dependent RNA helicase DBP5 (DBP5).